We begin with the raw amino-acid sequence, 148 residues long: Transthyretin-like protein 2 (148 aa).

Residues 1–17 (MSKYAILGLVLVGTVAS) form the signal peptide. Residue Asn-77 is glycosylated (N-linked (GlcNAc...) asparagine).

It belongs to the nematode transthyretin-like family.

Its subcellular location is the secreted. The sequence is that of Transthyretin-like protein 2 (ttr-2) from Caenorhabditis elegans.